A 381-amino-acid chain; its full sequence is (S)-scoulerine 9-O-methyltransferase (381 aa).

S-adenosyl-L-methionine-binding residues include Gly223, Glu246, Asp266, Met267, and Lys280. Catalysis depends on His284, which acts as the Proton acceptor.

Belongs to the class I-like SAM-binding methyltransferase superfamily. Cation-independent O-methyltransferase family. COMT subfamily.

The enzyme catalyses (S)-scoulerine + S-adenosyl-L-methionine = (S)-tetrahydrocolumbamine + S-adenosyl-L-homocysteine + H(+). Functionally, produces a precursor of protoberberine alkaloids. The protein is (S)-scoulerine 9-O-methyltransferase (SMT) of Coptis japonica (Japanese goldthread).